Consider the following 154-residue polypeptide: PHA granule-associated protein PhaP (154 aa).

It is found in the cytoplasmic granule. In terms of biological role, polyhydroxyalkanoate (PHA) granule structural protein. Important for PHA granule formation and separation, and for cell growth. The polypeptide is PHA granule-associated protein PhaP (phaP) (Haloferax mediterranei (strain ATCC 33500 / DSM 1411 / JCM 8866 / NBRC 14739 / NCIMB 2177 / R-4) (Halobacterium mediterranei)).